A 332-amino-acid polypeptide reads, in one-letter code: Glycerol-3-phosphate dehydrogenase [NAD(P)+] (332 aa).

4 residues coordinate NADPH: Ser-11, Phe-12, Lys-32, and Lys-106. 3 residues coordinate sn-glycerol 3-phosphate: Lys-106, Gly-137, and Ser-139. Position 141 (Ala-141) interacts with NADPH. Sn-glycerol 3-phosphate-binding residues include Lys-192, Asp-245, Ser-255, Arg-256, and Asn-257. Lys-192 acts as the Proton acceptor in catalysis. Arg-256 provides a ligand contact to NADPH. NADPH is bound by residues Val-280 and Glu-282.

It belongs to the NAD-dependent glycerol-3-phosphate dehydrogenase family.

The protein localises to the cytoplasm. The enzyme catalyses sn-glycerol 3-phosphate + NAD(+) = dihydroxyacetone phosphate + NADH + H(+). The catalysed reaction is sn-glycerol 3-phosphate + NADP(+) = dihydroxyacetone phosphate + NADPH + H(+). The protein operates within membrane lipid metabolism; glycerophospholipid metabolism. In terms of biological role, catalyzes the reduction of the glycolytic intermediate dihydroxyacetone phosphate (DHAP) to sn-glycerol 3-phosphate (G3P), the key precursor for phospholipid synthesis. The chain is Glycerol-3-phosphate dehydrogenase [NAD(P)+] from Staphylococcus aureus (strain USA300).